We begin with the raw amino-acid sequence, 707 residues long: ATP-dependent zinc metalloprotease FtsH (707 aa).

At 1–25 the chain is on the cytoplasmic side; the sequence is MSELDNKKDKSKDSNKKPKKPGAFS. A helical membrane pass occupies residues 26 to 46; the sequence is IGNIIIFVIVALLLIWVVFAF. At 47 to 128 the chain is on the extracellular side; sequence LPNNPGTNKS…GTTFTGLELA (82 aa). Residues 129 to 149 traverse the membrane as a helical segment; that stretch reads TLAIANTSASGIGTLNFSGLV. Over 150-707 the chain is Cytoplasmic; it reads TPTNQALAIL…IKTDESLDIK (558 aa). 246 to 253 serves as a coordination point for ATP; it reads GPPGTGKT. Histidine 468 provides a ligand contact to Zn(2+). Glutamate 469 is an active-site residue. Residues histidine 472 and aspartate 546 each contribute to the Zn(2+) site.

In the central section; belongs to the AAA ATPase family. This sequence in the C-terminal section; belongs to the peptidase M41 family. In terms of assembly, homohexamer. It depends on Zn(2+) as a cofactor.

It localises to the cell membrane. In terms of biological role, acts as a processive, ATP-dependent zinc metallopeptidase for both cytoplasmic and membrane proteins. Plays a role in the quality control of integral membrane proteins. The sequence is that of ATP-dependent zinc metalloprotease FtsH from Mycoplasma mobile (strain ATCC 43663 / 163K / NCTC 11711) (Mesomycoplasma mobile).